A 568-amino-acid polypeptide reads, in one-letter code: Protein yellow (568 aa).

A signal peptide spans 1-28; that stretch reads MHAQDKGGILPALSLLLIAVAMVSPSQA. N-linked (GlcNAc...) asparagine glycosylation is found at asparagine 151 and asparagine 222.

The protein belongs to the major royal jelly protein family.

The protein resides in the secreted. Its function is as follows. Controls the pigmentation pattern of the adult cuticle and larval mouth parts. The chain is Protein yellow (y) from Drosophila subobscura (Fruit fly).